A 143-amino-acid polypeptide reads, in one-letter code: Nucleoside diphosphate kinase (143 aa).

The ATP site is built by Lys-11, Phe-59, Arg-87, Thr-93, Arg-104, and Asn-114. His-117 serves as the catalytic Pros-phosphohistidine intermediate.

It belongs to the NDK family. As to quaternary structure, homotetramer. The cofactor is Mg(2+).

The protein resides in the cytoplasm. The catalysed reaction is a 2'-deoxyribonucleoside 5'-diphosphate + ATP = a 2'-deoxyribonucleoside 5'-triphosphate + ADP. The enzyme catalyses a ribonucleoside 5'-diphosphate + ATP = a ribonucleoside 5'-triphosphate + ADP. Its function is as follows. Major role in the synthesis of nucleoside triphosphates other than ATP. The ATP gamma phosphate is transferred to the NDP beta phosphate via a ping-pong mechanism, using a phosphorylated active-site intermediate. The polypeptide is Nucleoside diphosphate kinase (Escherichia coli O7:K1 (strain IAI39 / ExPEC)).